The sequence spans 461 residues: Asparagine--tRNA ligase (461 aa).

Belongs to the class-II aminoacyl-tRNA synthetase family. Homodimer.

Its subcellular location is the cytoplasm. It catalyses the reaction tRNA(Asn) + L-asparagine + ATP = L-asparaginyl-tRNA(Asn) + AMP + diphosphate + H(+). This is Asparagine--tRNA ligase from Solibacter usitatus (strain Ellin6076).